The chain runs to 301 residues: Probable alpha-L-glutamate ligase (301 aa).

The region spanning 104-287 (LQLLSRRGIG…VAGMIIEHLE (184 aa)) is the ATP-grasp domain. Residues lysine 141, 178-179 (EY), aspartate 187, and 211-213 (RSN) each bind ATP. The Mg(2+) site is built by aspartate 248, glutamate 260, and asparagine 262. Mn(2+) is bound by residues aspartate 248, glutamate 260, and asparagine 262.

Belongs to the RimK family. Mg(2+) is required as a cofactor. It depends on Mn(2+) as a cofactor.

This Pseudomonas putida (strain GB-1) protein is Probable alpha-L-glutamate ligase.